We begin with the raw amino-acid sequence, 256 residues long: Type III pantothenate kinase (256 aa).

6–13 is an ATP binding site; that stretch reads DVGNTNTV. Substrate is bound by residues Tyr100 and 107-110; that span reads GADR. Asp109 functions as the Proton acceptor in the catalytic mechanism. Asp129 is a K(+) binding site. Thr132 serves as a coordination point for ATP. Position 184 (Thr184) interacts with substrate.

Belongs to the type III pantothenate kinase family. Homodimer. NH4(+) is required as a cofactor. K(+) serves as cofactor.

The protein localises to the cytoplasm. The catalysed reaction is (R)-pantothenate + ATP = (R)-4'-phosphopantothenate + ADP + H(+). The protein operates within cofactor biosynthesis; coenzyme A biosynthesis; CoA from (R)-pantothenate: step 1/5. In terms of biological role, catalyzes the phosphorylation of pantothenate (Pan), the first step in CoA biosynthesis. The protein is Type III pantothenate kinase of Myxococcus xanthus (strain DK1622).